The sequence spans 337 residues: Inositol 2-dehydrogenase (337 aa).

The protein belongs to the Gfo/Idh/MocA family. As to quaternary structure, homotetramer.

It carries out the reaction myo-inositol + NAD(+) = scyllo-inosose + NADH + H(+). Involved in the oxidation of myo-inositol (MI) to 2-keto-myo-inositol (2KMI or 2-inosose). This chain is Inositol 2-dehydrogenase, found in Gluconacetobacter diazotrophicus (strain ATCC 49037 / DSM 5601 / CCUG 37298 / CIP 103539 / LMG 7603 / PAl5).